A 434-amino-acid polypeptide reads, in one-letter code: Methylenetetrahydrofolate--tRNA-(uracil-5-)-methyltransferase TrmFO (434 aa).

10 to 15 lines the FAD pocket; that stretch reads GAGLAG.

Belongs to the MnmG family. TrmFO subfamily. FAD serves as cofactor.

The protein resides in the cytoplasm. It catalyses the reaction uridine(54) in tRNA + (6R)-5,10-methylene-5,6,7,8-tetrahydrofolate + NADH + H(+) = 5-methyluridine(54) in tRNA + (6S)-5,6,7,8-tetrahydrofolate + NAD(+). It carries out the reaction uridine(54) in tRNA + (6R)-5,10-methylene-5,6,7,8-tetrahydrofolate + NADPH + H(+) = 5-methyluridine(54) in tRNA + (6S)-5,6,7,8-tetrahydrofolate + NADP(+). Its function is as follows. Catalyzes the folate-dependent formation of 5-methyl-uridine at position 54 (M-5-U54) in all tRNAs. This chain is Methylenetetrahydrofolate--tRNA-(uracil-5-)-methyltransferase TrmFO, found in Bacillus anthracis (strain A0248).